The primary structure comprises 433 residues: Protein translocase subunit SecY (433 aa).

10 helical membrane-spanning segments follow: residues 17–37, 71–91, 117–137, 141–161, 184–204, 212–232, 268–288, 310–330, 366–386, and 388–408; these read IVFTILILIVCRFGSFIPIPG, IFALAIMPYITASIIIQLMSV, LTVLLASFQAYGVAISLESIV, GPVVILAGFFFRVTTVITLVV, LIIFIGIISGVPSAIISMFEL, PLIALAVCIGVVVLIAIIIFF, GVIPPIFASSILLFPATLANF, YILLYVALIMFFSFFYTAIVF, LTVIGGIYLSVICVIPELLMN, and YVISLSLGGTSFLIVVNVVLD.

Belongs to the SecY/SEC61-alpha family. In terms of assembly, component of the Sec protein translocase complex. Heterotrimer consisting of SecY, SecE and SecG subunits. The heterotrimers can form oligomers, although 1 heterotrimer is thought to be able to translocate proteins. Interacts with the ribosome. Interacts with SecDF, and other proteins may be involved. Interacts with SecA.

Its subcellular location is the cell inner membrane. In terms of biological role, the central subunit of the protein translocation channel SecYEG. Consists of two halves formed by TMs 1-5 and 6-10. These two domains form a lateral gate at the front which open onto the bilayer between TMs 2 and 7, and are clamped together by SecE at the back. The channel is closed by both a pore ring composed of hydrophobic SecY resides and a short helix (helix 2A) on the extracellular side of the membrane which forms a plug. The plug probably moves laterally to allow the channel to open. The ring and the pore may move independently. The sequence is that of Protein translocase subunit SecY from Rickettsia felis (strain ATCC VR-1525 / URRWXCal2) (Rickettsia azadi).